Consider the following 695-residue polypeptide: Tail-specific protease (695 aa).

Residues 1–29 (MVMKFKMSKNVICYTWLSVCLSSAIPAFA) form the signal peptide. The region spanning 256-316 (IGTTLQSEDD…RLEDLVEKIK (61 aa)) is the PDZ domain. Catalysis depends on charge relay system residues Ser459, Asp470, and Lys484.

This sequence belongs to the peptidase S41A family.

It is found in the cell inner membrane. The enzyme catalyses The enzyme shows specific recognition of a C-terminal tripeptide, Xaa-Yaa-Zaa, in which Xaa is preferably Ala or Leu, Yaa is preferably Ala or Tyr, and Zaa is preferably Ala, but then cleaves at a variable distance from the C-terminus. A typical cleavage is -Ala-Ala-|-Arg-Ala-Ala-Lys-Glu-Asn-Tyr-Ala-Leu-Ala-Ala.. Involved in the cleavage of a C-terminal peptide of 11 residues from the precursor form of penicillin-binding protein 3 (PBP3). May be involved in protection of the bacterium from thermal and osmotic stresses. The polypeptide is Tail-specific protease (prc) (Haemophilus influenzae (strain ATCC 51907 / DSM 11121 / KW20 / Rd)).